Here is a 164-residue protein sequence, read N- to C-terminus: CB1 cannabinoid receptor-interacting protein 1 (164 aa).

It belongs to the CNRIP family. Interacts with the cannabinoid receptor CNR1 (via C-terminus). Does not interact with cannabinoid receptor CNR2. As to expression, highly expressed in brain. Also detected in heart, lung, intestine, kidney, testis, spleen, liver and muscle (at protein level).

Suppresses cannabinoid receptor CNR1-mediated tonic inhibition of voltage-gated calcium channels. The chain is CB1 cannabinoid receptor-interacting protein 1 (Cnrip1) from Mus musculus (Mouse).